Reading from the N-terminus, the 503-residue chain is Pentatricopeptide repeat-containing protein At2g30100, chloroplastic (503 aa).

Residues 1-50 (MAYAHVFASLTISTISLRRFLPRLHRNHSVKPNSRIICNLKLNYSAGKFR) constitute a chloroplast transit peptide. PPR repeat units lie at residues 341–375 (IGVV…GREP), 376–410 (EADL…GSQR), and 411–445 (KKKT…GLHP).

This sequence belongs to the PPR family. P subfamily.

The protein resides in the plastid. It localises to the chloroplast. The protein is Pentatricopeptide repeat-containing protein At2g30100, chloroplastic of Arabidopsis thaliana (Mouse-ear cress).